Here is a 72-residue protein sequence, read N- to C-terminus: Large ribosomal subunit protein uL29 (72 aa).

The protein belongs to the universal ribosomal protein uL29 family. As to quaternary structure, part of the 50S ribosomal subunit.

The protein is Large ribosomal subunit protein uL29 of Pyrococcus furiosus (strain ATCC 43587 / DSM 3638 / JCM 8422 / Vc1).